The chain runs to 106 residues: MSPIAFLLPFLLQMVLSTNVSTTSNNGVTEIRLDNKIVDLTKATVLERSKCCTVYRPVEDSSCIIVSSKHGASMVNCHGSVSISTSGKLSAEEMAEFNSLTQKYSG.

Positions 1–17 are cleaved as a signal peptide; that stretch reads MSPIAFLLPFLLQMVLS.

In terms of processing, contains 2 disulfide bonds. In terms of tissue distribution, expressed by the venom gland (anterior main gland) (at protein level).

Its subcellular location is the secreted. In Platymeris rhadamanthus (Red spot assassin bug), this protein is Venom family 8-like peptide Pr8a.